The primary structure comprises 202 residues: Urease accessory protein UreG (202 aa).

11 to 18 contacts GTP; that stretch reads GPVGSGKT.

This sequence belongs to the SIMIBI class G3E GTPase family. UreG subfamily. In terms of assembly, homodimer. UreD, UreF and UreG form a complex that acts as a GTP-hydrolysis-dependent molecular chaperone, activating the urease apoprotein by helping to assemble the nickel containing metallocenter of UreC. The UreE protein probably delivers the nickel.

Its subcellular location is the cytoplasm. Its function is as follows. Facilitates the functional incorporation of the urease nickel metallocenter. This process requires GTP hydrolysis, probably effectuated by UreG. In Magnetococcus marinus (strain ATCC BAA-1437 / JCM 17883 / MC-1), this protein is Urease accessory protein UreG.